The chain runs to 428 residues: Histidine--tRNA ligase (428 aa).

This sequence belongs to the class-II aminoacyl-tRNA synthetase family. As to quaternary structure, homodimer.

It localises to the cytoplasm. It carries out the reaction tRNA(His) + L-histidine + ATP = L-histidyl-tRNA(His) + AMP + diphosphate + H(+). This is Histidine--tRNA ligase from Mesomycoplasma hyopneumoniae (strain 7448) (Mycoplasma hyopneumoniae).